A 544-amino-acid chain; its full sequence is MSAKEIIFSTEVRDRLLRGVELLNNAVKVTLGPKGRNVVIDRSYGAPRITKDGVSVAKEIELEDKFENMGAQMVREVASKTNDLAGDGTTTATVLAASIFREGAKLVAAGMNPMDLKRGIDLAVTAVLAEIKLRATKVNSSSEIAQVGTIAANGDASVGEMIAGAMEKVGNEGVITVEEARTADTELDVVEGMQFDRGYLSPYFVTNAEKMRVELDDPYILIHEKKLGNLQTMLPILEAVVQSGKPLLIISEDVEGEALTTLVVNKLRGGLKIAAVKSPGFGDRRKAMLQDIAVLTAGQMISEDIGIKLENVTLDMLGRARRVLIEKDTTTIIDGSGDKASIQACISQIKAQIEETTSDYDKEKLQERLAKLTGGVAVIRVGGATELEVKEKKDRIDDALNATRAAVEEGIVAGGGVALLRAKSALASLTGENPEITAGIAIVRKALEAPIRQIADNAGVEGSIVIGKLVDSSDQNQGFDAQTETYVDMIKAGIVDPAKVVRTALRDAGSIAALLITAEAMVADIPEKNAAQNAGNGAMGGRGY.

Residues 30 to 33 (TLGP), lysine 51, 87 to 91 (DGTTT), glycine 415, and aspartate 496 each bind ATP.

This sequence belongs to the chaperonin (HSP60) family. Forms a cylinder of 14 subunits composed of two heptameric rings stacked back-to-back. Interacts with the co-chaperonin GroES.

It localises to the cytoplasm. It carries out the reaction ATP + H2O + a folded polypeptide = ADP + phosphate + an unfolded polypeptide.. Together with its co-chaperonin GroES, plays an essential role in assisting protein folding. The GroEL-GroES system forms a nano-cage that allows encapsulation of the non-native substrate proteins and provides a physical environment optimized to promote and accelerate protein folding. The chain is Chaperonin GroEL 4 from Sinorhizobium medicae (strain WSM419) (Ensifer medicae).